We begin with the raw amino-acid sequence, 433 residues long: Legumain (433 aa).

Positions 1-17 (MIWEFTVLLSLVLGTGA) are cleaved as a signal peptide. A propeptide spanning residues 18 to 25 (VPLEDPED) is cleaved from the precursor. Asparagine 91 carries an N-linked (GlcNAc...) asparagine glycan. Histidine 148 is an active-site residue. Asparagine 167 is a glycosylation site (N-linked (GlcNAc...) asparagine). Cysteine 189 functions as the Nucleophile in the catalytic mechanism. Asparagine 263 and asparagine 272 each carry an N-linked (GlcNAc...) asparagine glycan. Residues 324 to 433 (DLQESRRLVQ…SMNKVCHGYY (110 aa)) constitute a propeptide that is removed on maturation. 2 disulfide bridges follow: cysteine 378–cysteine 412 and cysteine 390–cysteine 429.

It belongs to the peptidase C13 family. In terms of assembly, homodimer before autocatalytic removal of the propeptide. Monomer after autocatalytic processing. May interact with integrins. Activated by autocatalytic processing at pH 4. As to expression, detected in kidney (at protein level).

The protein resides in the lysosome. It catalyses the reaction Hydrolysis of proteins and small molecule substrates at -Asn-|-Xaa- bonds.. Its function is as follows. Has a strict specificity for hydrolysis of asparaginyl bonds. Can also cleave aspartyl bonds slowly, especially under acidic conditions. Involved in the processing of proteins for MHC class II antigen presentation in the lysosomal/endosomal system. Also involved in MHC class I antigen presentation in cross-presenting dendritic cells by mediating cleavage and maturation of Perforin-2 (MPEG1), thereby promoting antigen translocation in the cytosol. Required for normal lysosomal protein degradation in renal proximal tubules. Required for normal degradation of internalized EGFR. Plays a role in the regulation of cell proliferation via its role in EGFR degradation. In Bos taurus (Bovine), this protein is Legumain (LGMN).